We begin with the raw amino-acid sequence, 204 residues long: Small ribosomal subunit protein uS3 (204 aa).

The KH type-2 domain occupies 37–105 (IRSYINESFK…NVEVNVVGVK (69 aa)).

Belongs to the universal ribosomal protein uS3 family. As to quaternary structure, part of the 30S ribosomal subunit. Forms a tight complex with proteins S10 and S14.

Functionally, binds the lower part of the 30S subunit head. Binds mRNA in the 70S ribosome, positioning it for translation. In Wolbachia pipientis wMel, this protein is Small ribosomal subunit protein uS3.